Consider the following 33-residue polypeptide: MNLEVVAQLTVLALIVVSGPLVIGLLALRKGNL.

Residues 5–25 (VVAQLTVLALIVVSGPLVIGL) traverse the membrane as a helical segment.

This sequence belongs to the Psb30/Ycf12 family. PSII is composed of 1 copy each of membrane proteins PsbA, PsbB, PsbC, PsbD, PsbE, PsbF, PsbH, PsbI, PsbJ, PsbK, PsbL, PsbM, PsbT, PsbX, PsbY, PsbZ, Psb30/Ycf12, peripheral proteins of the oxygen-evolving complex and a large number of cofactors. It forms dimeric complexes.

It localises to the plastid. The protein resides in the chloroplast thylakoid membrane. Its function is as follows. A core subunit of photosystem II (PSII), probably helps stabilize the reaction center. This is Photosystem II reaction center protein Psb30 from Zygnema circumcarinatum (Green alga).